The chain runs to 667 residues: Transketolase 2 (667 aa).

Residue histidine 25 participates in substrate binding. Residues histidine 65 and 113–115 each bind thiamine diphosphate; that span reads GPL. Aspartate 154 is a binding site for Mg(2+). Thiamine diphosphate-binding residues include glycine 155 and asparagine 184. 2 residues coordinate Mg(2+): asparagine 184 and isoleucine 186. Histidine 260 lines the substrate pocket. Thiamine diphosphate is bound at residue histidine 260. Lysine 342 is subject to N6-acetyllysine. Residues arginine 357 and serine 384 each contribute to the substrate site. Residue glutamate 410 is the Proton donor of the active site. Phenylalanine 436 is a binding site for thiamine diphosphate. 3 residues coordinate substrate: histidine 460, aspartate 468, and arginine 519.

This sequence belongs to the transketolase family. Homodimer. Mg(2+) serves as cofactor. The cofactor is Ca(2+). Mn(2+) is required as a cofactor. Requires Co(2+) as cofactor. It depends on thiamine diphosphate as a cofactor.

It carries out the reaction D-sedoheptulose 7-phosphate + D-glyceraldehyde 3-phosphate = aldehydo-D-ribose 5-phosphate + D-xylulose 5-phosphate. Its function is as follows. Catalyzes the reversible transfer of a two-carbon ketol group from sedoheptulose-7-phosphate to glyceraldehyde-3-phosphate, producing xylulose-5-phosphate and ribose-5-phosphate. Catalyzes the transfer of a two-carbon ketol group from a ketose donor to an aldose acceptor, via a covalent intermediate with the cofactor thiamine pyrophosphate. The protein is Transketolase 2 of Escherichia coli (strain K12).